The sequence spans 625 residues: Chaperone protein HtpG (625 aa).

Residues 1–337 (MNIQKKEVYS…SNNLPLNVSR (337 aa)) are a; substrate-binding. The segment at 338–552 (EILQDNSITQ…SNEMSTQMAK (215 aa)) is b. The c stretch occupies residues 553 to 625 (LFSAAGQSVP…ARTNKLILEQ (73 aa)).

This sequence belongs to the heat shock protein 90 family. Homodimer.

The protein resides in the cytoplasm. Functionally, molecular chaperone. Has ATPase activity. This Buchnera aphidicola subsp. Schizaphis graminum (strain Sg) protein is Chaperone protein HtpG.